The chain runs to 193 residues: Ion-translocating oxidoreductase complex subunit A (193 aa).

6 helical membrane passes run 5–25, 39–59, 63–83, 102–122, 134–154, and 171–191; these read LLLF…FLGL, MGMG…AWLI, ILIP…VIAV, LLGI…VALL, ALYG…FTAI, and AIAL…SGLV.

Belongs to the NqrDE/RnfAE family. As to quaternary structure, the complex is composed of six subunits: RsxA, RsxB, RsxC, RsxD, RsxE and RsxG.

The protein resides in the cell inner membrane. Its function is as follows. Part of a membrane-bound complex that couples electron transfer with translocation of ions across the membrane. Required to maintain the reduced state of SoxR. The polypeptide is Ion-translocating oxidoreductase complex subunit A (Shigella boydii serotype 4 (strain Sb227)).